Here is a 160-residue protein sequence, read N- to C-terminus: Phosphopantetheine adenylyltransferase (160 aa).

Thr-9 is a substrate binding site. Residues 9 to 10 (TF) and His-17 each bind ATP. Substrate-binding residues include Lys-41, Leu-73, and Arg-87. ATP is bound by residues 88-90 (GLR), Glu-98, and 123-129 (FSYTSSS).

It belongs to the bacterial CoaD family. As to quaternary structure, homohexamer. Mg(2+) serves as cofactor.

The protein resides in the cytoplasm. It catalyses the reaction (R)-4'-phosphopantetheine + ATP + H(+) = 3'-dephospho-CoA + diphosphate. The protein operates within cofactor biosynthesis; coenzyme A biosynthesis; CoA from (R)-pantothenate: step 4/5. Reversibly transfers an adenylyl group from ATP to 4'-phosphopantetheine, yielding dephospho-CoA (dPCoA) and pyrophosphate. The protein is Phosphopantetheine adenylyltransferase of Opitutus terrae (strain DSM 11246 / JCM 15787 / PB90-1).